The primary structure comprises 116 residues: Ribosome-binding factor A (116 aa).

The protein belongs to the RbfA family. In terms of assembly, monomer. Binds 30S ribosomal subunits, but not 50S ribosomal subunits or 70S ribosomes.

The protein resides in the cytoplasm. One of several proteins that assist in the late maturation steps of the functional core of the 30S ribosomal subunit. Associates with free 30S ribosomal subunits (but not with 30S subunits that are part of 70S ribosomes or polysomes). Required for efficient processing of 16S rRNA. May interact with the 5'-terminal helix region of 16S rRNA. This Streptococcus pyogenes serotype M28 (strain MGAS6180) protein is Ribosome-binding factor A.